The primary structure comprises 434 residues: Enolase (434 aa).

Residue Gln167 coordinates (2R)-2-phosphoglycerate. Glu209 serves as the catalytic Proton donor. Positions 246, 291, and 318 each coordinate Mg(2+). (2R)-2-phosphoglycerate contacts are provided by Lys343, Arg372, Ser373, and Lys394. Lys343 acts as the Proton acceptor in catalysis.

The protein belongs to the enolase family. In terms of assembly, component of the RNA degradosome, a multiprotein complex involved in RNA processing and mRNA degradation. The cofactor is Mg(2+).

It is found in the cytoplasm. The protein localises to the secreted. Its subcellular location is the cell surface. It catalyses the reaction (2R)-2-phosphoglycerate = phosphoenolpyruvate + H2O. It functions in the pathway carbohydrate degradation; glycolysis; pyruvate from D-glyceraldehyde 3-phosphate: step 4/5. Functionally, catalyzes the reversible conversion of 2-phosphoglycerate (2-PG) into phosphoenolpyruvate (PEP). It is essential for the degradation of carbohydrates via glycolysis. In Buchnera aphidicola subsp. Schizaphis graminum (strain Sg), this protein is Enolase.